The following is a 962-amino-acid chain: Leucine--tRNA ligase (962 aa).

The 'HIGH' region motif lies at 41-51; that stretch reads PYLNGNLHAGH. The 'KMSKS' region signature appears at 631-635; the sequence is KMSKS. Lys-634 provides a ligand contact to ATP.

The protein belongs to the class-I aminoacyl-tRNA synthetase family.

Its subcellular location is the cytoplasm. The catalysed reaction is tRNA(Leu) + L-leucine + ATP = L-leucyl-tRNA(Leu) + AMP + diphosphate. The sequence is that of Leucine--tRNA ligase from Methanococcoides burtonii (strain DSM 6242 / NBRC 107633 / OCM 468 / ACE-M).